A 457-amino-acid polypeptide reads, in one-letter code: Chromosomal replication initiator protein DnaA (457 aa).

The domain I, interacts with DnaA modulators stretch occupies residues 1-71 (MSPSIWEKCL…LLKNFCNINT (71 aa)). Residues 71–119 (TTPTLMLKICKPKIIQKKFFNELTLKKNILNSKLTYNVNTKLSNIIYSS) form a domain II region. The segment at 120–337 (EINTNYTFQN…GALNKILANS (218 aa)) is domain III, AAA+ region. 4 residues coordinate ATP: G165, G167, K168, and T169. Residues 338 to 457 (DSKKKIITIN…FLTLLKILSS (120 aa)) are domain IV, binds dsDNA.

This sequence belongs to the DnaA family. In terms of assembly, oligomerizes as a right-handed, spiral filament on DNA at oriC.

It is found in the cytoplasm. Plays an essential role in the initiation and regulation of chromosomal replication. ATP-DnaA binds to the origin of replication (oriC) to initiate formation of the DNA replication initiation complex once per cell cycle. Binds the DnaA box (a 9 base pair repeat at the origin) and separates the double-stranded (ds)DNA. Forms a right-handed helical filament on oriC DNA; dsDNA binds to the exterior of the filament while single-stranded (ss)DNA is stabiized in the filament's interior. The ATP-DnaA-oriC complex binds and stabilizes one strand of the AT-rich DNA unwinding element (DUE), permitting loading of DNA polymerase. After initiation quickly degrades to an ADP-DnaA complex that is not apt for DNA replication. Binds acidic phospholipids. The sequence is that of Chromosomal replication initiator protein DnaA from Buchnera aphidicola subsp. Baizongia pistaciae (strain Bp).